The primary structure comprises 335 residues: Cathepsin B (335 aa).

A signal peptide spans 1-19; that stretch reads MWQLLATLSCLLVLTSARS. The propeptide at 20–79 is activation peptide; sequence SLHFPPLSDEMVNYVNKQNTTWKAGHNFYNVDLSYVKKLCGAILGGPKLPQRDAFAADMV. 6 cysteine pairs are disulfide-bonded: C93–C122, C105–C150, C141–C207, C142–C146, C179–C211, and C187–C198. Residue C108 is part of the active site. An N-linked (GlcNAc...) asparagine glycan is attached at N192. Residue K220 is modified to N6-acetyllysine. Residues H278 and N298 contribute to the active site. The propeptide occupies 333–335; that stretch reads HQH.

Belongs to the peptidase C1 family. Dimer of a heavy chain and a light chain cross-linked by a disulfide bond. Interacts with SRPX2. Directly interacts with SHKBP1.

The protein localises to the lysosome. It is found in the melanosome. It localises to the secreted. Its subcellular location is the extracellular space. The protein resides in the apical cell membrane. It catalyses the reaction Hydrolysis of proteins with broad specificity for peptide bonds. Preferentially cleaves -Arg-Arg-|-Xaa bonds in small molecule substrates (thus differing from cathepsin L). In addition to being an endopeptidase, shows peptidyl-dipeptidase activity, liberating C-terminal dipeptides.. Thiol protease which is believed to participate in intracellular degradation and turnover of proteins. Cleaves matrix extracellular phosphoglycoprotein MEPE. Involved in the solubilization of cross-linked TG/thyroglobulin in the thyroid follicle lumen. Has also been implicated in tumor invasion and metastasis. The polypeptide is Cathepsin B (CTSB) (Ovis aries (Sheep)).